We begin with the raw amino-acid sequence, 301 residues long: tRNA pseudouridine synthase B (301 aa).

Asp47 acts as the Nucleophile in catalysis.

This sequence belongs to the pseudouridine synthase TruB family. Type 1 subfamily.

The catalysed reaction is uridine(55) in tRNA = pseudouridine(55) in tRNA. Functionally, responsible for synthesis of pseudouridine from uracil-55 in the psi GC loop of transfer RNAs. In Cereibacter sphaeroides (strain ATCC 17025 / ATH 2.4.3) (Rhodobacter sphaeroides), this protein is tRNA pseudouridine synthase B.